A 113-amino-acid chain; its full sequence is MNILSGKLPFLLGAVFAGSVVLATSVQAETSKLIIESGDSAQSRQHASMEKEQWNDTRMLRQKVNKRTEKEWDKADAAFDNRDKCEQSSNINAYWEPNTLRCLDRRTGRVITP.

The first 28 residues, 1 to 28 (MNILSGKLPFLLGAVFAGSVVLATSVQA), serve as a signal peptide directing secretion.

This sequence belongs to the UPF0482 family.

This chain is UPF0482 protein YnfB, found in Escherichia fergusonii (strain ATCC 35469 / DSM 13698 / CCUG 18766 / IAM 14443 / JCM 21226 / LMG 7866 / NBRC 102419 / NCTC 12128 / CDC 0568-73).